The chain runs to 189 residues: Apolipoprotein D (189 aa).

The signal sequence occupies residues 1–21 (MAPTLLLLLPALAGLISVAQG). Pyrrolidone carboxylic acid is present on Gln22. Cystine bridges form between Cys29–Cys135 and Cys62–Cys186. Residues Asn66 and Asn99 are each glycosylated (N-linked (GlcNAc...) asparagine).

This sequence belongs to the calycin superfamily. Lipocalin family. Homodimer. In terms of tissue distribution, most heavily expressed in adrenal gland, lung, brain, testis and spleen.

The protein localises to the secreted. Functionally, APOD occurs in the macromolecular complex with lecithin-transport and binding of bilin. Appears to be able to transport a variety of ligands in a number of different contexts. This is Apolipoprotein D (APOD) from Oryctolagus cuniculus (Rabbit).